We begin with the raw amino-acid sequence, 194 residues long: tRNA (guanine-N(1)-)-methyltransferase (194 aa).

Residues glycine 78 and 97 to 102 (IGDYVL) contribute to the S-adenosyl-L-methionine site.

The protein belongs to the RNA methyltransferase TrmD family. As to quaternary structure, homodimer.

The protein localises to the cytoplasm. It catalyses the reaction guanosine(37) in tRNA + S-adenosyl-L-methionine = N(1)-methylguanosine(37) in tRNA + S-adenosyl-L-homocysteine + H(+). Functionally, specifically methylates guanosine-37 in various tRNAs. The sequence is that of tRNA (guanine-N(1)-)-methyltransferase from Mycoplasma mobile (strain ATCC 43663 / 163K / NCTC 11711) (Mesomycoplasma mobile).